We begin with the raw amino-acid sequence, 228 residues long: 7-cyano-7-deazaguanine synthase (228 aa).

9–19 (YSGGLDSTTCM) is a binding site for ATP. Zn(2+) contacts are provided by Cys189, Cys199, Cys202, and Cys205.

It belongs to the QueC family. Requires Zn(2+) as cofactor.

It carries out the reaction 7-carboxy-7-deazaguanine + NH4(+) + ATP = 7-cyano-7-deazaguanine + ADP + phosphate + H2O + H(+). It functions in the pathway purine metabolism; 7-cyano-7-deazaguanine biosynthesis. In terms of biological role, catalyzes the ATP-dependent conversion of 7-carboxy-7-deazaguanine (CDG) to 7-cyano-7-deazaguanine (preQ(0)). This Geotalea uraniireducens (strain Rf4) (Geobacter uraniireducens) protein is 7-cyano-7-deazaguanine synthase.